Consider the following 148-residue polypeptide: Arginine repressor (148 aa).

This sequence belongs to the ArgR family.

Its subcellular location is the cytoplasm. It functions in the pathway amino-acid biosynthesis; L-arginine biosynthesis [regulation]. Regulates arginine biosynthesis genes. The sequence is that of Arginine repressor from Chlorobium chlorochromatii (strain CaD3).